Consider the following 243-residue polypeptide: Small ribosomal subunit protein eS4 (243 aa).

An S4 RNA-binding domain is found at 43-105; sequence IPLLYIVRDY…TGEHYRVLPN (63 aa).

This sequence belongs to the eukaryotic ribosomal protein eS4 family.

The polypeptide is Small ribosomal subunit protein eS4 (rps4e) (Pyrococcus horikoshii (strain ATCC 700860 / DSM 12428 / JCM 9974 / NBRC 100139 / OT-3)).